The sequence spans 414 residues: MLVIEDVRAYEVLDSRGNPTVKAEVTLSDGSVGAAIVPSGASTGSKEALELRDNDERFGGKGVLKAVANVNETIADEILGLDAFNQTQLDDTLRELDGTNNYSNLGANATLGVSMATARAAAAALGMPLYRYLGGANASILPVPMCNIINGGAHANNNVDFQEFMIMPFGFTSFKEALRSVCEIYAILKKELANSGHSTALGDEGGFAPNLANNTEPIDLLMTCIKKAGYENRVKIALDVASTEFFKDGKYHMEGKAFSSEALIERYVELCAKYPICSIEDGLAENDFEGWIKLTEKLGNKIQLVGDDLFVTNEDILREGIIKKMANAVLIKPNQIGTITQTMRTVRLAQRNNYKCVMSHRSGESEDAFIADFAVALNTGQIKTGALARGERTAKYNRLLEIEFESDEYLGEKL.

Glutamine 162 serves as a coordination point for (2R)-2-phosphoglycerate. Residue glutamate 204 is the Proton donor of the active site. Aspartate 239, glutamate 280, and aspartate 307 together coordinate Mg(2+). The (2R)-2-phosphoglycerate site is built by lysine 332, arginine 361, serine 362, and lysine 383. Lysine 332 (proton acceptor) is an active-site residue.

It belongs to the enolase family. Mg(2+) serves as cofactor.

Its subcellular location is the cytoplasm. The protein resides in the secreted. It is found in the cell surface. The enzyme catalyses (2R)-2-phosphoglycerate = phosphoenolpyruvate + H2O. It participates in carbohydrate degradation; glycolysis; pyruvate from D-glyceraldehyde 3-phosphate: step 4/5. In terms of biological role, catalyzes the reversible conversion of 2-phosphoglycerate (2-PG) into phosphoenolpyruvate (PEP). It is essential for the degradation of carbohydrates via glycolysis. The chain is Enolase from Campylobacter jejuni subsp. jejuni serotype O:2 (strain ATCC 700819 / NCTC 11168).